The chain runs to 318 residues: L-lactate dehydrogenase (318 aa).

Residues Val18, Asp39, Lys44, Tyr69, and Gly83–Ala84 each bind NAD(+). Substrate is bound by residues Gln86 and Arg92. NAD(+) is bound by residues Ser105, Val122–Asn124, and Ser147. Residue Asn124 to Asp127 coordinates substrate. Asp152 to Arg155 contacts substrate. The active-site Proton acceptor is His179. Tyr225 bears the Phosphotyrosine mark. Residue Thr234 participates in substrate binding.

This sequence belongs to the LDH/MDH superfamily. LDH family. As to quaternary structure, homotetramer.

It is found in the cytoplasm. The catalysed reaction is (S)-lactate + NAD(+) = pyruvate + NADH + H(+). It participates in fermentation; pyruvate fermentation to lactate; (S)-lactate from pyruvate: step 1/1. In terms of biological role, catalyzes the conversion of lactate to pyruvate. In Clostridium botulinum (strain Loch Maree / Type A3), this protein is L-lactate dehydrogenase.